The chain runs to 335 residues: Probable cytosolic iron-sulfur protein assembly protein Ciao1 (335 aa).

WD repeat units lie at residues 12-51, 57-96, 101-140, 146-185, 192-231, 250-289, and 301-335; these read GHKG…WSTK, GHKR…FECN, GHEN…EFEC, AHTQ…SDWD, SHTS…NDAG, QHSR…KRDE, and AHEQ…KVDD.

It belongs to the WD repeat CIA1 family.

In terms of biological role, essential component of the cytosolic iron-sulfur (Fe/S) protein assembly machinery. Required for the maturation of extramitochondrial Fe/S proteins. The chain is Probable cytosolic iron-sulfur protein assembly protein Ciao1 from Drosophila pseudoobscura pseudoobscura (Fruit fly).